Here is a 368-residue protein sequence, read N- to C-terminus: Peptide chain release factor 2 (368 aa).

The residue at position 250 (Gln-250) is an N5-methylglutamine.

The protein belongs to the prokaryotic/mitochondrial release factor family. Methylated by PrmC. Methylation increases the termination efficiency of RF2.

The protein localises to the cytoplasm. Peptide chain release factor 2 directs the termination of translation in response to the peptide chain termination codons UGA and UAA. This is Peptide chain release factor 2 from Rickettsia bellii (strain RML369-C).